Here is a 144-residue protein sequence, read N- to C-terminus: Large ribosomal subunit protein uL11 (144 aa).

It belongs to the universal ribosomal protein uL11 family. In terms of assembly, part of the ribosomal stalk of the 50S ribosomal subunit. Interacts with L10 and the large rRNA to form the base of the stalk. L10 forms an elongated spine to which L12 dimers bind in a sequential fashion forming a multimeric L10(L12)X complex. One or more lysine residues are methylated.

Functionally, forms part of the ribosomal stalk which helps the ribosome interact with GTP-bound translation factors. This is Large ribosomal subunit protein uL11 from Parafrankia sp. (strain EAN1pec).